Reading from the N-terminus, the 201-residue chain is Large ribosomal subunit protein uL4 (201 aa).

Residues 44–68 (KAQKTRSEVAGTTKKSKKQKGGGAR) are disordered.

It belongs to the universal ribosomal protein uL4 family. As to quaternary structure, part of the 50S ribosomal subunit.

Functionally, one of the primary rRNA binding proteins, this protein initially binds near the 5'-end of the 23S rRNA. It is important during the early stages of 50S assembly. It makes multiple contacts with different domains of the 23S rRNA in the assembled 50S subunit and ribosome. Forms part of the polypeptide exit tunnel. The protein is Large ribosomal subunit protein uL4 of Xanthomonas campestris pv. campestris (strain 8004).